Here is a 1031-residue protein sequence, read N- to C-terminus: Protein translocase subunit SecA (1031 aa).

ATP-binding positions include glutamine 143, 161–165 (GEGKT), and aspartate 662. Zn(2+) is bound by residues cysteine 1015, cysteine 1017, cysteine 1026, and cysteine 1027.

It belongs to the SecA family. Monomer and homodimer. Part of the essential Sec protein translocation apparatus which comprises SecA, SecYEG and auxiliary proteins SecDF. Other proteins may also be involved. It depends on Zn(2+) as a cofactor.

It localises to the cell inner membrane. The protein resides in the cytoplasm. The catalysed reaction is ATP + H2O + cellular proteinSide 1 = ADP + phosphate + cellular proteinSide 2.. Its function is as follows. Part of the Sec protein translocase complex. Interacts with the SecYEG preprotein conducting channel. Has a central role in coupling the hydrolysis of ATP to the transfer of proteins into and across the cell membrane, serving as an ATP-driven molecular motor driving the stepwise translocation of polypeptide chains across the membrane. The sequence is that of Protein translocase subunit SecA from Chlorobaculum tepidum (strain ATCC 49652 / DSM 12025 / NBRC 103806 / TLS) (Chlorobium tepidum).